The chain runs to 404 residues: NADH-quinone oxidoreductase subunit D 2 (404 aa).

The protein belongs to the complex I 49 kDa subunit family. As to quaternary structure, NDH-1 is composed of 14 different subunits. Subunits NuoB, C, D, E, F, and G constitute the peripheral sector of the complex.

The protein resides in the cell inner membrane. The catalysed reaction is a quinone + NADH + 5 H(+)(in) = a quinol + NAD(+) + 4 H(+)(out). Its function is as follows. NDH-1 shuttles electrons from NADH, via FMN and iron-sulfur (Fe-S) centers, to quinones in the respiratory chain. The immediate electron acceptor for the enzyme in this species is believed to be ubiquinone. Couples the redox reaction to proton translocation (for every two electrons transferred, four hydrogen ions are translocated across the cytoplasmic membrane), and thus conserves the redox energy in a proton gradient. The polypeptide is NADH-quinone oxidoreductase subunit D 2 (Rhizobium meliloti (strain 1021) (Ensifer meliloti)).